The sequence spans 3390 residues: Polyprotein-FSD (3390 aa).

The SF3 helicase domain maps to 369–543 (TVKRRNEILT…ELGPFNYKNP (175 aa)). ATP is bound at residue 396 to 403 (GPGGIGKT). Residues 1206 to 1423 (KPYFQIAEEK…MSALIYKEDL (218 aa)) form the Peptidase C3 domain. Catalysis depends on for 3C-like protease activity residues H1258, E1295, and C1381. The RdRp catalytic domain maps to 1914 to 2042 (KNFFSCDYKN…AVDDSIADIF (129 aa)). Position 2346 is an N-acetylmethionine; by host (M2346). 2 disordered regions span residues 2576–2609 (YNDLNLSGGTDPDPDPEPDPDPEPGPDPEPGVDE) and 3168–3190 (TPSEAYDNSKGFVPQPGTSKSIA). Residues 2587-2609 (PDPDPEPDPDPEPGPDPEPGVDE) show a composition bias toward acidic residues.

In terms of processing, N-acetylated. Proteolytic cleavages of the polyprotein yield mature proteins.

Its subcellular location is the virion. The enzyme catalyses RNA(n) + a ribonucleoside 5'-triphosphate = RNA(n+1) + diphosphate. The catalysed reaction is ATP + H2O = ADP + phosphate + H(+). Its function is as follows. Assembles with VP1 and VP2 to form an icosahedral capsid. VP1 is about 5 time more abundant than VP1-FSD in the virion. In terms of biological role, assembles with VP1 and VP1-FSD to form an icosahedral capsid. Replicates genomic and antigenomic RNA. In Solenopsis invicta (Red imported fire ant), this protein is Polyprotein-FSD.